The sequence spans 182 residues: Protein canopy homolog 2 (182 aa).

The first 20 residues, 1–20, serve as a signal peptide directing secretion; that stretch reads MKGWGWLALLLGALLGTAWA. The region spanning 24 to 175 is the Saposin B-type domain; that stretch reads QDLHCGACRA…KRTDLCDHAL (152 aa). Disulfide bonds link Cys28-Cys171, Cys31-Cys164, and Cys86-Cys137. A Phosphoserine modification is found at Ser115. The short motif at 179 to 182 is the Prevents secretion from ER element; sequence HDEL.

It belongs to the canopy family. As to quaternary structure, interacts with MYLIP/MIR. Expressed in different tissues. Highest levels are detected in adult placenta, liver and pancreas.

The protein resides in the endoplasmic reticulum. Positive regulator of neurite outgrowth by stabilizing myosin regulatory light chain (MRLC). It prevents MIR-mediated MRLC ubiquitination and its subsequent proteasomal degradation. This chain is Protein canopy homolog 2 (CNPY2), found in Homo sapiens (Human).